We begin with the raw amino-acid sequence, 391 residues long: MAKHCQGAAAEDIGTISDEELLRWSKEELAKRLRKVENEKMSLMVEHGNMMKDVNRRLQVHLHEIRGLKEVNQKLQDDNQELRELCCFLDDDRQKGKKLSREWQRFGRHSATMMWKEVGVYQQKLKELEAKQESLIRDNLELKEIILMLDEERNGAGSRSSIDSQNSLTNLNGSSGPRDVGDGSSTSSTGSAGSPDHHHHHHHHTKPTENKAGTVRKSTDDLSIPPHHRSIPNGLNDSSTTYIRQLETRVKLLEDDNKLLSQHSTSGELRTLRKGLSPYHSESQLSPLPQYQEPLQNGSTRVTPEISSTAPAGYIPVVQKPEAVVHAMKVLEVHENLDRQMSDTYEEDLSEKEKAIVREMCNVVWRKLGDATNSKPSIRQHLSGNQFKGPL.

Coiled coils occupy residues 19-86 (EELL…RELC) and 116-146 (KEVG…KEII). 2 disordered regions span residues 155–238 (GAGS…LNDS) and 278–303 (PYHS…TRVT). Positions 157–175 (GSRSSIDSQNSLTNLNGSS) are enriched in polar residues. Residues 182–194 (DGSSTSSTGSAGS) are compositionally biased toward low complexity. Residues 280–303 (HSESQLSPLPQYQEPLQNGSTRVT) are compositionally biased toward polar residues.

Belongs to the CCDC85 family.

Its subcellular location is the cell junction. The protein resides in the tight junction. It localises to the adherens junction. Functionally, may play a role in cell-cell adhesion and epithelium development through its interaction with proteins of the beta-catenin family. May play an important role in cortical development, especially in the maintenance of radial glia. The sequence is that of Coiled-coil domain-containing protein 85C (ccdc85c) from Xenopus tropicalis (Western clawed frog).